The primary structure comprises 82 residues: Transcription elongation factor 1 homolog (82 aa).

Residues C26, C29, C50, and C53 each contribute to the Zn(2+) site.

It belongs to the ELOF1 family.

Its subcellular location is the nucleus. Its function is as follows. Transcription elongation factor implicated in the maintenance of proper chromatin structure in actively transcribed regions. This chain is Transcription elongation factor 1 homolog, found in Manduca sexta (Tobacco hawkmoth).